The primary structure comprises 168 residues: Photosystem I assembly protein Ycf3 (168 aa).

TPR repeat units follow at residues 35–68 (AFAY…EMDP), 72–105 (SYIL…NPFL), and 120–153 (GEQA…TPGN).

The protein belongs to the Ycf3 family.

The protein resides in the plastid membrane. Essential for the assembly of the photosystem I (PSI) complex. May act as a chaperone-like factor to guide the assembly of the PSI subunits. This is Photosystem I assembly protein Ycf3 from Cuscuta gronovii (Common dodder).